Consider the following 420-residue polypeptide: Tyrosine--tRNA ligase (420 aa).

Y33 is an L-tyrosine binding site. A 'HIGH' region motif is present at residues 38-47; that stretch reads PTGDSLHAGH. Y167 and Q171 together coordinate L-tyrosine. The 'KMSKS' region signature appears at 227–231; it reads KFGKS. K230 serves as a coordination point for ATP. In terms of domain architecture, S4 RNA-binding spans 352–418; that stretch reads PTIIDLLIGA…GKKNFAGVKY (67 aa).

Belongs to the class-I aminoacyl-tRNA synthetase family. TyrS type 1 subfamily. As to quaternary structure, homodimer.

The protein resides in the cytoplasm. The catalysed reaction is tRNA(Tyr) + L-tyrosine + ATP = L-tyrosyl-tRNA(Tyr) + AMP + diphosphate + H(+). Functionally, catalyzes the attachment of tyrosine to tRNA(Tyr) in a two-step reaction: tyrosine is first activated by ATP to form Tyr-AMP and then transferred to the acceptor end of tRNA(Tyr). In Corynebacterium diphtheriae (strain ATCC 700971 / NCTC 13129 / Biotype gravis), this protein is Tyrosine--tRNA ligase.